Consider the following 192-residue polypeptide: Crossover junction endodeoxyribonuclease RuvC (192 aa).

Residues Asp-7, Glu-67, and Asp-140 contribute to the active site. Residues Asp-7, Glu-67, and Asp-140 each contribute to the Mg(2+) site. A disordered region spans residues 158-192 (RQSGVPPRTNSRRKSGTGGSWEQFVRQSPNVVVRS). The segment covering 182–192 (VRQSPNVVVRS) has biased composition (polar residues).

Belongs to the RuvC family. Homodimer which binds Holliday junction (HJ) DNA. The HJ becomes 2-fold symmetrical on binding to RuvC with unstacked arms; it has a different conformation from HJ DNA in complex with RuvA. In the full resolvosome a probable DNA-RuvA(4)-RuvB(12)-RuvC(2) complex forms which resolves the HJ. Mg(2+) is required as a cofactor.

The protein resides in the cytoplasm. It catalyses the reaction Endonucleolytic cleavage at a junction such as a reciprocal single-stranded crossover between two homologous DNA duplexes (Holliday junction).. In terms of biological role, the RuvA-RuvB-RuvC complex processes Holliday junction (HJ) DNA during genetic recombination and DNA repair. Endonuclease that resolves HJ intermediates. Cleaves cruciform DNA by making single-stranded nicks across the HJ at symmetrical positions within the homologous arms, yielding a 5'-phosphate and a 3'-hydroxyl group; requires a central core of homology in the junction. The consensus cleavage sequence is 5'-(A/T)TT(C/G)-3'. Cleavage occurs on the 3'-side of the TT dinucleotide at the point of strand exchange. HJ branch migration catalyzed by RuvA-RuvB allows RuvC to scan DNA until it finds its consensus sequence, where it cleaves and resolves the cruciform DNA. In Chlorobium chlorochromatii (strain CaD3), this protein is Crossover junction endodeoxyribonuclease RuvC.